A 359-amino-acid polypeptide reads, in one-letter code: Glycerol-1-phosphate dehydrogenase [NAD(P)+] (359 aa).

NAD(+) contacts are provided by residues 107-111 and 129-132; these read GRVID and TAAS. Residue Asp134 coordinates substrate. Residue Ser138 participates in NAD(+) binding. A substrate-binding site is contributed by Asp181. Residues Asp181 and His261 each coordinate Zn(2+). His265 provides a ligand contact to substrate. His277 provides a ligand contact to Zn(2+).

This sequence belongs to the glycerol-1-phosphate dehydrogenase family. The cofactor is Zn(2+).

It localises to the cytoplasm. The catalysed reaction is sn-glycerol 1-phosphate + NAD(+) = dihydroxyacetone phosphate + NADH + H(+). It catalyses the reaction sn-glycerol 1-phosphate + NADP(+) = dihydroxyacetone phosphate + NADPH + H(+). The protein operates within membrane lipid metabolism; glycerophospholipid metabolism. Functionally, catalyzes the NAD(P)H-dependent reduction of dihydroxyacetonephosphate (DHAP or glycerone phosphate) to glycerol 1-phosphate (G1P). The G1P thus generated is used as the glycerophosphate backbone of phospholipids in the cellular membranes of Archaea. This Methanospirillum hungatei JF-1 (strain ATCC 27890 / DSM 864 / NBRC 100397 / JF-1) protein is Glycerol-1-phosphate dehydrogenase [NAD(P)+].